The primary structure comprises 99 residues: Cytochrome c oxidase subunit 4 isoform 1, mitochondrial (99 aa).

The Mitochondrial matrix segment spans residues 1–73 (SVVKREDFSL…TFAEMNRGSN (73 aa)). Lys-4 is subject to N6-acetyllysine; alternate. An N6-succinyllysine; alternate modification is found at Lys-4. Position 28 is an N6-acetyllysine (Lys-28). Ser-31 and Ser-33 each carry phosphoserine. Lys-35 carries the N6-acetyllysine; alternate modification. Lys-35 carries the post-translational modification N6-succinyllysine; alternate. The residue at position 42 (Lys-42) is an N6-acetyllysine. A helical membrane pass occupies residues 74 to 99 (EWKTVVGTATFFIGFTALIIMWQKRY).

This sequence belongs to the cytochrome c oxidase IV family. Component of the cytochrome c oxidase (complex IV, CIV), a multisubunit enzyme composed of 14 subunits. The complex is composed of a catalytic core of 3 subunits MT-CO1, MT-CO2 and MT-CO3, encoded in the mitochondrial DNA, and 11 supernumerary subunits COX4I, COX5A, COX5B, COX6A, COX6B, COX6C, COX7A, COX7B, COX7C, COX8 and NDUFA4, which are encoded in the nuclear genome. The complex exists as a monomer or a dimer and forms supercomplexes (SCs) in the inner mitochondrial membrane with NADH-ubiquinone oxidoreductase (complex I, CI) and ubiquinol-cytochrome c oxidoreductase (cytochrome b-c1 complex, complex III, CIII), resulting in different assemblies (supercomplex SCI(1)III(2)IV(1) and megacomplex MCI(2)III(2)IV(2)). Interacts with PHB2; the interaction decreases in absence of SPHK2. Interacts with AFG1L. Interacts with ABCB7; this interaction allows the regulation of cellular iron homeostasis and cellular reactive oxygen species (ROS) levels in cardiomyocytes. Interacts with FLVCR2; this interaction occurs in the absence of heme and is disrupted upon heme binding. Interacts with IRGC.

The protein localises to the mitochondrion inner membrane. It participates in energy metabolism; oxidative phosphorylation. Functionally, component of the cytochrome c oxidase, the last enzyme in the mitochondrial electron transport chain which drives oxidative phosphorylation. The respiratory chain contains 3 multisubunit complexes succinate dehydrogenase (complex II, CII), ubiquinol-cytochrome c oxidoreductase (cytochrome b-c1 complex, complex III, CIII) and cytochrome c oxidase (complex IV, CIV), that cooperate to transfer electrons derived from NADH and succinate to molecular oxygen, creating an electrochemical gradient over the inner membrane that drives transmembrane transport and the ATP synthase. Cytochrome c oxidase is the component of the respiratory chain that catalyzes the reduction of oxygen to water. Electrons originating from reduced cytochrome c in the intermembrane space (IMS) are transferred via the dinuclear copper A center (CU(A)) of subunit 2 and heme A of subunit 1 to the active site in subunit 1, a binuclear center (BNC) formed by heme A3 and copper B (CU(B)). The BNC reduces molecular oxygen to 2 water molecules using 4 electrons from cytochrome c in the IMS and 4 protons from the mitochondrial matrix. This chain is Cytochrome c oxidase subunit 4 isoform 1, mitochondrial (COX4I1), found in Trachypithecus cristatus (Silvered leaf-monkey).